Consider the following 387-residue polypeptide: Exodeoxyribonuclease 7 large subunit (387 aa).

It belongs to the XseA family. In terms of assembly, heterooligomer composed of large and small subunits.

The protein localises to the cytoplasm. The catalysed reaction is Exonucleolytic cleavage in either 5'- to 3'- or 3'- to 5'-direction to yield nucleoside 5'-phosphates.. In terms of biological role, bidirectionally degrades single-stranded DNA into large acid-insoluble oligonucleotides, which are then degraded further into small acid-soluble oligonucleotides. This is Exodeoxyribonuclease 7 large subunit from Campylobacter jejuni subsp. jejuni serotype O:2 (strain ATCC 700819 / NCTC 11168).